The sequence spans 188 residues: Pyridoxal 5'-phosphate synthase subunit PdxT (188 aa).

Residue 47–49 (GES) coordinates L-glutamine. Cys-79 acts as the Nucleophile in catalysis. Residues Arg-105 and 134–135 (IR) contribute to the L-glutamine site. Residues His-170 and Glu-172 each act as charge relay system in the active site.

It belongs to the glutaminase PdxT/SNO family. In the presence of PdxS, forms a dodecamer of heterodimers. Only shows activity in the heterodimer.

It catalyses the reaction aldehydo-D-ribose 5-phosphate + D-glyceraldehyde 3-phosphate + L-glutamine = pyridoxal 5'-phosphate + L-glutamate + phosphate + 3 H2O + H(+). The enzyme catalyses L-glutamine + H2O = L-glutamate + NH4(+). It functions in the pathway cofactor biosynthesis; pyridoxal 5'-phosphate biosynthesis. Its function is as follows. Catalyzes the hydrolysis of glutamine to glutamate and ammonia as part of the biosynthesis of pyridoxal 5'-phosphate. The resulting ammonia molecule is channeled to the active site of PdxS. The protein is Pyridoxal 5'-phosphate synthase subunit PdxT of Listeria monocytogenes serotype 4b (strain CLIP80459).